Here is a 420-residue protein sequence, read N- to C-terminus: Glutamyl-tRNA reductase (420 aa).

Substrate-binding positions include 49-52 (TCNR), Ser-109, 114-116 (EPQ), and Gln-120. Residue Cys-50 is the Nucleophile of the active site. 189–194 (GAGETI) serves as a coordination point for NADP(+).

It belongs to the glutamyl-tRNA reductase family. As to quaternary structure, homodimer.

The catalysed reaction is (S)-4-amino-5-oxopentanoate + tRNA(Glu) + NADP(+) = L-glutamyl-tRNA(Glu) + NADPH + H(+). It functions in the pathway porphyrin-containing compound metabolism; protoporphyrin-IX biosynthesis; 5-aminolevulinate from L-glutamyl-tRNA(Glu): step 1/2. Functionally, catalyzes the NADPH-dependent reduction of glutamyl-tRNA(Glu) to glutamate 1-semialdehyde (GSA). This is Glutamyl-tRNA reductase from Serratia proteamaculans (strain 568).